We begin with the raw amino-acid sequence, 381 residues long: Fatty acid elongase 6 (381 aa).

The next 7 helical transmembrane spans lie at 10-30 (IAAA…LVYS), 69-89 (LPYL…SLIV), 107-127 (GLVH…GLMI), 153-173 (LIWL…IMLL), 182-202 (FLHV…LLVA), 216-236 (GVHV…SGIV), and 280-300 (LLQI…NFLV). Positions 184–188 (HVYHH) match the HxxHH motif motif. The Nucleophile role is filled by H187. Positions 362 to 381 (RKNGNGNGQKASLQAMAGSR) are disordered.

This sequence belongs to the ELO family.

It is found in the membrane. Its pathway is lipid metabolism; polyunsaturated fatty acid biosynthesis. Its function is as follows. Involved in the synthesis of fatty acids. Elongates C18 polyunsaturated fatty acids (PUFAs) with a preference for Delta6 PUFAs. This Leishmania major protein is Fatty acid elongase 6.